A 316-amino-acid chain; its full sequence is Transaldolase (316 aa).

Lys-132 serves as the catalytic Schiff-base intermediate with substrate.

Belongs to the transaldolase family. Type 1 subfamily. Homodimer.

It localises to the cytoplasm. The catalysed reaction is D-sedoheptulose 7-phosphate + D-glyceraldehyde 3-phosphate = D-erythrose 4-phosphate + beta-D-fructose 6-phosphate. It functions in the pathway carbohydrate degradation; pentose phosphate pathway; D-glyceraldehyde 3-phosphate and beta-D-fructose 6-phosphate from D-ribose 5-phosphate and D-xylulose 5-phosphate (non-oxidative stage): step 2/3. Functionally, transaldolase is important for the balance of metabolites in the pentose-phosphate pathway. This chain is Transaldolase, found in Aliivibrio fischeri (strain MJ11) (Vibrio fischeri).